A 111-amino-acid polypeptide reads, in one-letter code: MSRRPNFGGMGMGGMNMQQMMKQAKKLQAQMAQEQENITAQEFTGKSADDLVVATFTGDRKLKDIKIDKEAIDPDDPDMLQDLVIDAVNKGLSQIDEATQASLGKYTKGLM.

Belongs to the YbaB/EbfC family. As to quaternary structure, homodimer.

Its subcellular location is the cytoplasm. It localises to the nucleoid. Functionally, binds to DNA and alters its conformation. May be involved in regulation of gene expression, nucleoid organization and DNA protection. The polypeptide is Nucleoid-associated protein lhv_0401 (Lactobacillus helveticus (strain DPC 4571)).